The chain runs to 749 residues: Serine/threonine-protein phosphatase 4 regulatory subunit 3 (749 aa).

As to quaternary structure, regulatory subunit 3 (R3) of the histone H2A phosphatase complex (HTP-C) consisting of PPH3, PSY2 and PSY4.

It is found in the nucleus. In terms of biological role, core regulatory subunit of the histone H2A phosphatase complex, which dephosphorylates H2AS128ph (gamma-H2A) that has been displaced from sites of DNA lesions in the double-stranded DNA break repair process. Dephosphorylation is necessary for efficient recovery from the DNA damage checkpoint. The polypeptide is Serine/threonine-protein phosphatase 4 regulatory subunit 3 (PSY2) (Kluyveromyces lactis (strain ATCC 8585 / CBS 2359 / DSM 70799 / NBRC 1267 / NRRL Y-1140 / WM37) (Yeast)).